Reading from the N-terminus, the 180-residue chain is Chromatin structure-remodeling complex protein RSC14 (180 aa).

In terms of assembly, interacts with STH1, RSC3 and ARP9. Component of the two forms of the RSC complex composed of at least either RSC1 or RSC2, and ARP7, ARP9, LDB7, NPL6, RSC3, RSC30, RSC4, RSC58, RSC6, RSC8, RSC9, SFH1, STH1, HTL1 and probably RTT102. The complexes interact with histone and histone variant components of centromeric chromatin. Component of a fungal-specific module (HTL1-LDB7-NPL6-RSC3-RSC30) within the RSC complex.

It is found in the nucleus. Component of the chromatin structure-remodeling complex (RSC), which is involved in transcription regulation and nucleosome positioning. RSC is responsible for the transfer of a histone octamer from a nucleosome core particle to naked DNA. The reaction requires ATP and involves an activated RSC-nucleosome intermediate. Remodeling reaction also involves DNA translocation, DNA twist and conformational change. As a reconfigurer of centromeric and flanking nucleosomes, RSC complex is required both for proper kinetochore function in chromosome segregation and, via a PKC1-dependent signaling pathway, for organization of the cellular cytoskeleton. Together with HTL1, NPL6, RSC3, RSC30 components, defines a fungal-specific module within the RSC complex that plays a role in many cellular functions including the maintenance of cell wall integrity. May be involved in the transfer of mannosylphosphate (MP) groups into N-linked oligosaccharides. The protein is Chromatin structure-remodeling complex protein RSC14 (LDB7) of Saccharomyces cerevisiae (strain ATCC 204508 / S288c) (Baker's yeast).